We begin with the raw amino-acid sequence, 375 residues long: Chaperone protein DnaJ (375 aa).

The J domain occupies 4-68; that stretch reads DYYEVLGVGK…QKRAQYDRFG (65 aa). A CR-type zinc finger spans residues 129-211; it reads GKETDVEIPK…CRGSGRVKVR (83 aa). Residues cysteine 142, cysteine 145, cysteine 159, cysteine 162, cysteine 185, cysteine 188, cysteine 199, and cysteine 202 each contribute to the Zn(2+) site. CXXCXGXG motif repeat units lie at residues 142–149, 159–166, 185–192, and 199–206; these read CDTCHGSG, CKTCSGTG, CTTCEGKG, and CSSCRGSG. Residues 349–375 are disordered; sequence LSGEKPGQHGGEDEGFFEKMKRAFRGE.

Belongs to the DnaJ family. As to quaternary structure, homodimer. It depends on Zn(2+) as a cofactor.

It localises to the cytoplasm. Its function is as follows. Participates actively in the response to hyperosmotic and heat shock by preventing the aggregation of stress-denatured proteins and by disaggregating proteins, also in an autonomous, DnaK-independent fashion. Unfolded proteins bind initially to DnaJ; upon interaction with the DnaJ-bound protein, DnaK hydrolyzes its bound ATP, resulting in the formation of a stable complex. GrpE releases ADP from DnaK; ATP binding to DnaK triggers the release of the substrate protein, thus completing the reaction cycle. Several rounds of ATP-dependent interactions between DnaJ, DnaK and GrpE are required for fully efficient folding. Also involved, together with DnaK and GrpE, in the DNA replication of plasmids through activation of initiation proteins. The protein is Chaperone protein DnaJ of Brevibacillus choshinensis.